Here is a 586-residue protein sequence, read N- to C-terminus: Asparagine synthetase, nodule [glutamine-hydrolyzing] (586 aa).

The active-site For GATase activity is the Cys-2. In terms of domain architecture, Glutamine amidotransferase type-2 spans 2–185 (CGILAVLGCS…PGHLYSSKER (184 aa)). L-glutamine-binding positions include 50 to 54 (RLAIV), 75 to 77 (NGE), and Asp-98. In terms of domain architecture, Asparagine synthetase spans 193-517 (PPWFNEAIIP…PQNSARLTVP (325 aa)). ATP is bound by residues Leu-232, Val-268, and 342–343 (SG).

As to expression, root nodules.

The enzyme catalyses L-aspartate + L-glutamine + ATP + H2O = L-asparagine + L-glutamate + AMP + diphosphate + H(+). It participates in amino-acid biosynthesis; L-asparagine biosynthesis; L-asparagine from L-aspartate (L-Gln route): step 1/1. The chain is Asparagine synthetase, nodule [glutamine-hydrolyzing] (AS1) from Pisum sativum (Garden pea).